A 238-amino-acid polypeptide reads, in one-letter code: MATYAILGSTGNCGSAIIQNLLKSPNNKVHAYCRNQTKLQRLIPEVVDNKNVQIFQGSIYDVELLADCVRGTKAVFLVVTTNDNVPGCRVSRDCATSVIQALQKIKAEASPGLKLPKLVLLSSATIDDHLARHMPGWFRPIMLAAASHVYEDLRLTEVFLRSHADWVSSIFIKPAGLSVDVSRGHKLTLDEEESFISYLDLSAGMIEAAADDESRYDGRNVGVELSSRGELRCVLSWD.

Belongs to the avfA family.

It functions in the pathway secondary metabolite biosynthesis. Its function is as follows. Oxidoreductase; part of the gene cluster that mediates the biosynthesis of the dimeric xanthones cryptosporioptides. The pathway begins with the synthesis of atrochrysone thioester by the polyketide synthase dmx-nrPKS. The atrochrysone carboxyl ACP thioesterase dmxR1 then breaks the thioester bond and releases the atrochrysone carboxylic acid from dmx-nrPKS. Atrochrysone carboxylic acid is decarboxylated by the decarboxylase dmxR15, and oxidized by the anthrone oxygenase dmxR16 to yield emodin. Emodin is then reduced to emodin hydroquinone by the oxidoreductase dmxR7. A-ring reduction by the short chain dehydrogenase dmxR18, dehydration by the scytalone dehydratase-like protein dmxR17 and probable spontaneous re-oxidation, results in overall deoxygenation to chrysophanol. Baeyer-Villiger oxidation by the Baeyer-Villiger monooxygenase (BVMO) dmxR6 then yields monodictylactone in equilibrium with monodictyphenone. In the case of the cryptosporioptides biosynthesis, monodictylactone is reduced at C-12 to an alcohol (by the short chain dehydrogenases dmxR12 or dmxR8) and hydroxylated at C-5 by dmxR9, yielding the electron-rich aromatic which could eliminate H(2)O to form the ortho-quinonemethide, followed by tautomerisation to paraquinone and complete the formal reduction to produce the 10-methylgroup. Conjugate addition of C-4a-OH to the resulting paraquinone by the monooxygenase dmxR10 then gives cyclohexadienone, which is then reduced at C-5 by the short chain dehydrogenase dmxR3 to give the dihydroxanthone. The 6,7-epoxide in the cryptosporioptides could be introduced by the cytochrome P450 monooxygenase dmxL3. The highly reducing PKS dmxL2 manufactures butyrate, which is further carboxylated by dmxL1 to form ethylmalonate. It is not yet clear whether the carboxylation occurs while the butyrate is attached to the ACP of dmxL2, but this unusual fungal metabolite could then be esterified to O-5 by the O-acetyltransferase dmxR13. Finally, dimerization performed by dmxR5 gives the observed dimers cryptosporioptides A, B and C as the final products of the pathway. This is Oxidoreductase dmxR7 from Cryptosporiopsis sp. (strain 8999).